Reading from the N-terminus, the 523-residue chain is Transcription factor MYB120 (523 aa).

HTH myb-type domains follow at residues 23 to 75 (GVIL…ANHL) and 76 to 130 (RPNL…KRLL). 2 DNA-binding regions (H-T-H motif) span residues 51-75 (WNAV…ANHL) and 103-126 (WARM…NTRL). Disordered regions lie at residues 140-254 (DIIP…YPTL), 332-373 (QTAT…SHYT), 396-426 (QIPQ…GAHR), and 444-470 (LASG…NNTN). Positions 147–167 (LHPHPHHQQQQQHNHHHHHHQ) are enriched in basic residues. Polar residues predominate over residues 175-185 (MYFQPQSSQRN). 3 stretches are compositionally biased toward low complexity: residues 202–212 (SSSSFTFHTTT), 223–232 (TPNTPSQLSS), and 341–368 (NPYS…PSFL). A compositionally biased stretch (polar residues) spans 396-410 (QIPQIDGFNNVNNFT).

As to expression, expressed in pollen grains and pollen tube. Mostly expressed in mature pollen grains, and, to a lower extent, in inflorescences and siliques.

The protein localises to the nucleus. In terms of biological role, transcription activator. Binds to 5'-CAACTGTC-3' and/or 5'-TAACAAA-3' motif in target gene promoter to promote their expression. Together with MYB97 and MYB101, functions as a male factor that controls pollen tube-synergid interaction in fertilization. Required for pollen tube growth arrest and sperm cell release in the female gametophyte, probably via the regulation of pollen tube-specific gene expression. This chain is Transcription factor MYB120, found in Arabidopsis thaliana (Mouse-ear cress).